We begin with the raw amino-acid sequence, 453 residues long: MRETSVHIVSLGCPKNLIDSEVMAALLEQAGCRIVSGPEEADILLLNTCAFILPAREESIDEIFRLAEWKKAGKCRHLIVTGCLPQRYGAELAAELPEVDLFLGISEVPNIADHLRVLMEGKHSEKNRVIVTNPLFLMDAGHPRLLSTPPYSAYLKIAEGCSNRCSYCIIPRLRGKARSRPIEDILREAEDLVDRGVRELILVAQDTTAYGRDLEGKPTLALLLRELAGLNTLAWIRILYTYPTGLTDELLNVIANQDRICSYLDVPIQHIDDDILAAMKRRGDSHLIRNSLERARAVIPDLALRTSLITGFPGETPAKFHRLIAFVQETRFDHLGVFPYSPEEGTPAEKLPRQVSQRTKETRRNLLMEEQAVISHEINQTLVGSLQEVLIEGPSSSPDYPMIGRCRRQAPDIDGLTYVKGGKQPFLPGSLVQCRIVAADDYDLFAEVISSPD.

An MTTase N-terminal domain is found at threonine 4 to glutamate 120. The [4Fe-4S] cluster site is built by cysteine 13, cysteine 49, cysteine 83, cysteine 161, cysteine 165, and cysteine 168. In terms of domain architecture, Radical SAM core spans serine 147–glutamate 377. The TRAM domain occupies glutamine 380–serine 450.

This sequence belongs to the methylthiotransferase family. RimO subfamily. [4Fe-4S] cluster is required as a cofactor.

The protein localises to the cytoplasm. The catalysed reaction is L-aspartate(89)-[ribosomal protein uS12]-hydrogen + (sulfur carrier)-SH + AH2 + 2 S-adenosyl-L-methionine = 3-methylsulfanyl-L-aspartate(89)-[ribosomal protein uS12]-hydrogen + (sulfur carrier)-H + 5'-deoxyadenosine + L-methionine + A + S-adenosyl-L-homocysteine + 2 H(+). Functionally, catalyzes the methylthiolation of an aspartic acid residue of ribosomal protein uS12. The polypeptide is Ribosomal protein uS12 methylthiotransferase RimO (Syntrophus aciditrophicus (strain SB)).